The chain runs to 479 residues: Ribosomal RNA small subunit methyltransferase F (479 aa).

S-adenosyl-L-methionine-binding positions include Ala-125 to Lys-131, Glu-149, Asp-176, and Asp-194. The active-site Nucleophile is the Cys-247.

The protein belongs to the class I-like SAM-binding methyltransferase superfamily. RsmB/NOP family.

It localises to the cytoplasm. The catalysed reaction is cytidine(1407) in 16S rRNA + S-adenosyl-L-methionine = 5-methylcytidine(1407) in 16S rRNA + S-adenosyl-L-homocysteine + H(+). Its function is as follows. Specifically methylates the cytosine at position 1407 (m5C1407) of 16S rRNA. The protein is Ribosomal RNA small subunit methyltransferase F of Escherichia fergusonii (strain ATCC 35469 / DSM 13698 / CCUG 18766 / IAM 14443 / JCM 21226 / LMG 7866 / NBRC 102419 / NCTC 12128 / CDC 0568-73).